Reading from the N-terminus, the 31-residue chain is Cytochrome b6-f complex subunit 6 (31 aa).

A helical membrane pass occupies residues 4-26; sequence LTSYFGFLLAALTITSALFIGLS.

Belongs to the PetL family. As to quaternary structure, the 4 large subunits of the cytochrome b6-f complex are cytochrome b6, subunit IV (17 kDa polypeptide, PetD), cytochrome f and the Rieske protein, while the 4 small subunits are PetG, PetL, PetM and PetN. The complex functions as a dimer.

It localises to the plastid. Its subcellular location is the chloroplast thylakoid membrane. Functionally, component of the cytochrome b6-f complex, which mediates electron transfer between photosystem II (PSII) and photosystem I (PSI), cyclic electron flow around PSI, and state transitions. PetL is important for photoautotrophic growth as well as for electron transfer efficiency and stability of the cytochrome b6-f complex. In Aethionema grandiflorum (Persian stone-cress), this protein is Cytochrome b6-f complex subunit 6.